Here is a 72-residue protein sequence, read N- to C-terminus: Translation initiation factor IF-1 (72 aa).

Residues 1–72 enclose the S1-like domain; that stretch reads MAKEDCIEME…SKGRIIYRAR (72 aa).

This sequence belongs to the IF-1 family. In terms of assembly, component of the 30S ribosomal translation pre-initiation complex which assembles on the 30S ribosome in the order IF-2 and IF-3, IF-1 and N-formylmethionyl-tRNA(fMet); mRNA recruitment can occur at any time during PIC assembly.

The protein resides in the cytoplasm. One of the essential components for the initiation of protein synthesis. Stabilizes the binding of IF-2 and IF-3 on the 30S subunit to which N-formylmethionyl-tRNA(fMet) subsequently binds. Helps modulate mRNA selection, yielding the 30S pre-initiation complex (PIC). Upon addition of the 50S ribosomal subunit IF-1, IF-2 and IF-3 are released leaving the mature 70S translation initiation complex. The chain is Translation initiation factor IF-1 from Pseudoalteromonas atlantica (strain T6c / ATCC BAA-1087).